Here is an 834-residue protein sequence, read N- to C-terminus: Glycerol-3-phosphate acyltransferase (834 aa).

Residues 309–314 (CHRSHI) carry the HXXXXD motif motif.

The protein belongs to the GPAT/DAPAT family.

The protein resides in the cell inner membrane. It catalyses the reaction sn-glycerol 3-phosphate + an acyl-CoA = a 1-acyl-sn-glycero-3-phosphate + CoA. It functions in the pathway phospholipid metabolism; CDP-diacylglycerol biosynthesis; CDP-diacylglycerol from sn-glycerol 3-phosphate: step 1/3. This chain is Glycerol-3-phosphate acyltransferase, found in Pseudomonas aeruginosa (strain LESB58).